A 160-amino-acid chain; its full sequence is tRNA (cytidine(56)-2'-O)-methyltransferase (160 aa).

S-adenosyl-L-methionine is bound by residues Leu-68, 94 to 98 (GAEKV), and 112 to 119 (IGNQPHSE).

This sequence belongs to the aTrm56 family. Homodimer.

It is found in the cytoplasm. The enzyme catalyses cytidine(56) in tRNA + S-adenosyl-L-methionine = 2'-O-methylcytidine(56) in tRNA + S-adenosyl-L-homocysteine + H(+). Specifically catalyzes the AdoMet-dependent 2'-O-ribose methylation of cytidine at position 56 in tRNAs. In Saccharolobus solfataricus (strain ATCC 35092 / DSM 1617 / JCM 11322 / P2) (Sulfolobus solfataricus), this protein is tRNA (cytidine(56)-2'-O)-methyltransferase.